Here is a 350-residue protein sequence, read N- to C-terminus: Histidinol-phosphate aminotransferase (350 aa).

The residue at position 207 (Lys-207) is an N6-(pyridoxal phosphate)lysine.

Belongs to the class-II pyridoxal-phosphate-dependent aminotransferase family. Histidinol-phosphate aminotransferase subfamily. In terms of assembly, homodimer. Requires pyridoxal 5'-phosphate as cofactor.

It catalyses the reaction L-histidinol phosphate + 2-oxoglutarate = 3-(imidazol-4-yl)-2-oxopropyl phosphate + L-glutamate. It participates in amino-acid biosynthesis; L-histidine biosynthesis; L-histidine from 5-phospho-alpha-D-ribose 1-diphosphate: step 7/9. In Streptococcus thermophilus (strain ATCC BAA-491 / LMD-9), this protein is Histidinol-phosphate aminotransferase.